Consider the following 200-residue polypeptide: Large ribosomal subunit protein uL4 (200 aa).

The tract at residues 43–65 (RAQKTRSEVSGGGAKPWRQKGTG) is disordered.

This sequence belongs to the universal ribosomal protein uL4 family. In terms of assembly, part of the 50S ribosomal subunit.

In terms of biological role, one of the primary rRNA binding proteins, this protein initially binds near the 5'-end of the 23S rRNA. It is important during the early stages of 50S assembly. It makes multiple contacts with different domains of the 23S rRNA in the assembled 50S subunit and ribosome. Its function is as follows. Forms part of the polypeptide exit tunnel. The protein is Large ribosomal subunit protein uL4 of Aliivibrio salmonicida (strain LFI1238) (Vibrio salmonicida (strain LFI1238)).